Consider the following 404-residue polypeptide: Propionate kinase (404 aa).

The protein belongs to the acetokinase family. PduW subfamily.

The protein localises to the cytoplasm. It catalyses the reaction propanoate + ATP = propanoyl phosphate + ADP. The protein operates within polyol metabolism; 1,2-propanediol degradation. Its function is as follows. Works with phosphate acetyltransferase (pta) to capture exogenous propionate and regenerate propionyl-CoA during degradation of 1,2-propanediol (1,2-PD). This Klebsiella pneumoniae subsp. pneumoniae (strain ATCC 700721 / MGH 78578) protein is Propionate kinase.